The primary structure comprises 300 residues: Cation-efflux pump FieF (300 aa).

Transmembrane regions (helical) follow at residues 12–32 (AAIA…FAWW), 39–59 (ILAA…NLLV), 82–102 (AALA…LTGI), and 114–134 (PGVG…LVSF). D45 and D49 together coordinate Zn(2+). Zn(2+) is bound by residues H153 and D157. The next 2 helical transmembrane spans lie at 156-176 (SDVM…YGWH) and 178-198 (ADAL…LRMG).

Belongs to the cation diffusion facilitator (CDF) transporter (TC 2.A.4) family. FieF subfamily. Homodimer.

It localises to the cell inner membrane. It carries out the reaction Zn(2+)(in) + H(+)(out) = Zn(2+)(out) + H(+)(in). The enzyme catalyses Cd(2+)(in) + H(+)(out) = Cd(2+)(out) + H(+)(in). It catalyses the reaction Fe(2+)(in) + H(+)(out) = Fe(2+)(out) + H(+)(in). In terms of biological role, divalent metal cation transporter which exports Zn(2+), Cd(2+) and possibly Fe(2+). May be involved in zinc and iron detoxification by efflux. In Escherichia coli O7:K1 (strain IAI39 / ExPEC), this protein is Cation-efflux pump FieF.